The primary structure comprises 477 residues: PTS system glucose-specific EIICB component (477 aa).

Residues 1–14 (MFKNAFANLQKVGK) lie on the Cytoplasmic side of the membrane. Residues 1-388 (MFKNAFANLQ…LDLKTPGRED (388 aa)) form the PTS EIIC type-1 domain. A helical membrane pass occupies residues 15-35 (SLMLPVSVLPIAGILLGVGSA). Residues 36 to 50 (NFSWLPAVVSHVMAE) lie on the Periplasmic side of the membrane. A helical transmembrane segment spans residues 51–71 (AGGSVFANMPLIFAIGVALGF). Residues 72–79 (TNNDGVSA) are Cytoplasmic-facing. The helical transmembrane segment at 80-100 (LAAVVAYGIMVKTMAVVAPLV) threads the bilayer. At 101–111 (LHLPAEEIAAK) the chain is on the periplasmic side. A helical membrane pass occupies residues 112-132 (HLADTGVLGGIISGAIAAYMF). Residues 133–151 (NRFYRIKLPEYLGFFAGKR) are Cytoplasmic-facing. A helical membrane pass occupies residues 152 to 172 (FVPIISGLAAIFTGVVLSFVW). Topologically, residues 173 to 190 (PPIGTAIQAFSQWAAYQN) are periplasmic. A helical membrane pass occupies residues 191-211 (PVVAFGIYGFIERCLVPFGLH). Over 212–248 (HIWNVPFQMQIGEYTNAAGQVFHGDIPRYMAGDPTAG) the chain is Cytoplasmic. The chain crosses the membrane as a helical span at residues 249 to 269 (MLSGGFLFKMYGLPAAAIAIW). The Periplasmic segment spans residues 270–279 (HSAKPENRAK). The chain crosses the membrane as a helical span at residues 280–300 (VGGIMISAALTSFLTGITEPI). Over 301–309 (EFSFMFVAP) the chain is Cytoplasmic. Residues 310–330 (ILYIIHAILAGLAFPICILLG) form a helical membrane-spanning segment. Residues 331-355 (MRDGTSFSHGLIDFIVLSGNSSKLW) are Periplasmic-facing. Residues 356–376 (LFPIVGAGYAIVYYTVFRVLI) traverse the membrane as a helical segment. Topologically, residues 377–477 (KALDLKTPGR…TEMDEYIRNS (101 aa)) are cytoplasmic. Positions 399–477 (SEMAPALVAA…TEMDEYIRNS (79 aa)) constitute a PTS EIIB type-1 domain. The active-site Phosphocysteine intermediate; for EIIB activity is cysteine 421. Position 421 is a phosphocysteine (cysteine 421).

The protein localises to the cell inner membrane. It carries out the reaction N(pros)-phospho-L-histidyl-[protein] + D-glucose(out) = D-glucose 6-phosphate(in) + L-histidyl-[protein]. Functionally, the phosphoenolpyruvate-dependent sugar phosphotransferase system (sugar PTS), a major carbohydrate active transport system, catalyzes the phosphorylation of incoming sugar substrates concomitantly with their translocation across the cell membrane. The enzyme II complex composed of PtsG and Crr is involved in glucose transport. Also functions as a chemoreceptor monitoring the environment for changes in sugar concentration. It can also phosphorylate mannose, methyl alpha-glucoside and 2-deoxy-glucose. The chain is PTS system glucose-specific EIICB component (ptsG) from Salmonella typhimurium (strain LT2 / SGSC1412 / ATCC 700720).